A 311-amino-acid polypeptide reads, in one-letter code: Aspartate carbamoyltransferase catalytic subunit (311 aa).

Residues Arg57 and Thr58 each contribute to the carbamoyl phosphate site. L-aspartate is bound at residue Lys86. Carbamoyl phosphate-binding residues include Arg107, His135, and Gln138. Positions 168 and 230 each coordinate L-aspartate. Residues Leu269 and Pro270 each contribute to the carbamoyl phosphate site.

The protein belongs to the aspartate/ornithine carbamoyltransferase superfamily. ATCase family. Heterooligomer of catalytic and regulatory chains.

It carries out the reaction carbamoyl phosphate + L-aspartate = N-carbamoyl-L-aspartate + phosphate + H(+). Its pathway is pyrimidine metabolism; UMP biosynthesis via de novo pathway; (S)-dihydroorotate from bicarbonate: step 2/3. Catalyzes the condensation of carbamoyl phosphate and aspartate to form carbamoyl aspartate and inorganic phosphate, the committed step in the de novo pyrimidine nucleotide biosynthesis pathway. The polypeptide is Aspartate carbamoyltransferase catalytic subunit (Staphylothermus marinus (strain ATCC 43588 / DSM 3639 / JCM 9404 / F1)).